The following is an 85-amino-acid chain: uncharacterized protein (85 aa).

A helical transmembrane segment spans residues 39-59 (FILFEISMYIIFIVTFCYKII).

The protein resides in the host membrane. This is an uncharacterized protein from Gallid herpesvirus 2 (strain Chicken/Md5/ATCC VR-987) (GaHV-2).